A 253-amino-acid polypeptide reads, in one-letter code: tRNA1(Val) (adenine(37)-N6)-methyltransferase (253 aa).

This sequence belongs to the methyltransferase superfamily. tRNA (adenine-N(6)-)-methyltransferase family.

The protein localises to the cytoplasm. It carries out the reaction adenosine(37) in tRNA1(Val) + S-adenosyl-L-methionine = N(6)-methyladenosine(37) in tRNA1(Val) + S-adenosyl-L-homocysteine + H(+). In terms of biological role, specifically methylates the adenine in position 37 of tRNA(1)(Val) (anticodon cmo5UAC). This Dickeya chrysanthemi (strain Ech1591) (Dickeya zeae (strain Ech1591)) protein is tRNA1(Val) (adenine(37)-N6)-methyltransferase.